Consider the following 327-residue polypeptide: Vacuolar protein sorting-associated protein 26A (327 aa).

Residues 305–327 (RNFHQRYESPEPRPSLSAEQPEM) are disordered.

It belongs to the VPS26 family. As to quaternary structure, component of the heterotrimeric retromer cargo-selective complex (CSC) which is believed to associate with variable sorting nexins to form functionally distinct retromer complex variants.

Its subcellular location is the cytoplasm. It is found in the endosome membrane. The protein resides in the early endosome. Functionally, acts as a component of the retromer cargo-selective complex (CSC). The CSC is believed to be the core functional component of retromer or respective retromer complex variants acting to prevent missorting of selected transmembrane cargo proteins into the lysosomal degradation pathway. Retromer mediates retrograde transport of cargo proteins from endosomes to the trans-Golgi network (TGN). This Danio rerio (Zebrafish) protein is Vacuolar protein sorting-associated protein 26A (vps26a).